The following is a 280-amino-acid chain: Undecaprenyl-diphosphatase (280 aa).

Helical transmembrane passes span 1 to 21 (MTIL…FLPV), 41 to 61 (FVRA…LVLY), 87 to 107 (FDLY…GFLF), 115 to 135 (LGSV…MLFV), 147 to 167 (ITYP…FLPG), 186 to 206 (KAAA…ATLL), 225 to 245 (IVLL…IKFF), and 260 to 280 (YRIL…SLAV).

It belongs to the UppP family.

The protein localises to the cell inner membrane. It carries out the reaction di-trans,octa-cis-undecaprenyl diphosphate + H2O = di-trans,octa-cis-undecaprenyl phosphate + phosphate + H(+). Functionally, catalyzes the dephosphorylation of undecaprenyl diphosphate (UPP). Confers resistance to bacitracin. The chain is Undecaprenyl-diphosphatase from Porphyromonas gingivalis (strain ATCC 33277 / DSM 20709 / CIP 103683 / JCM 12257 / NCTC 11834 / 2561).